The primary structure comprises 231 residues: uncharacterized protein (231 aa).

10-34 (VVTGAGSGIGEAIATLLHEEGAKVV) lines the NADP(+) pocket. S140 lines the substrate pocket. The Proton acceptor role is filled by Y153.

It belongs to the short-chain dehydrogenases/reductases (SDR) family.

This is an uncharacterized protein from Staphylococcus aureus (strain N315).